The primary structure comprises 122 residues: Fluoride-specific ion channel FluC (122 aa).

4 helical membrane-spanning segments follow: residues 1-21, 35-55, 67-87, and 98-118; these read MYAF…RHYL, WAIL…SAYL, FLLT…LNLI, and FLNL…GFWL. Residues Gly74 and Thr77 each contribute to the Na(+) site.

The protein belongs to the fluoride channel Fluc/FEX (TC 1.A.43) family.

The protein resides in the cell inner membrane. It catalyses the reaction fluoride(in) = fluoride(out). Its activity is regulated as follows. Na(+) is not transported, but it plays an essential structural role and its presence is essential for fluoride channel function. Its function is as follows. Fluoride-specific ion channel. Important for reducing fluoride concentration in the cell, thus reducing its toxicity. The chain is Fluoride-specific ion channel FluC from Dichelobacter nodosus (strain VCS1703A).